The primary structure comprises 274 residues: Octanoyltransferase LipM (274 aa).

A BPL/LPL catalytic domain is found at G31–L245. The Acyl-thioester intermediate role is filled by C147.

The protein belongs to the octanoyltransferase LipM family. As to quaternary structure, monomer.

The enzyme catalyses octanoyl-[ACP] + L-lysyl-[protein] = N(6)-octanoyl-L-lysyl-[protein] + holo-[ACP] + H(+). It functions in the pathway protein modification; protein lipoylation via endogenous pathway; protein N(6)-(lipoyl)lysine from octanoyl-[acyl-carrier-protein]. Functionally, catalyzes the transfer of endogenously produced octanoic acid from octanoyl-acyl-carrier-protein onto the lipoyl domain of GcvH, an intermediate carrier during protein lipoylation. This Kyrpidia tusciae (strain DSM 2912 / NBRC 15312 / T2) (Bacillus tusciae) protein is Octanoyltransferase LipM.